Here is a 2636-residue protein sequence, read N- to C-terminus: Ankyrin repeat and KH domain-containing protein CBG24701 (2636 aa).

ANK repeat units follow at residues 252–281, 286–317, 361–390, 435–464, 468–500, 505–534, 536–564, 566–595, 598–627, 632–661, and 665–695; these read SRITPLMEAAASSSEMIVELLLDYGMDPNA, NCNTALIYAAATDDRDMVEVILEHEGPHKVDV, NDNSPLIFAAMKGFLDIATVILDYQDKNQQ, NLPSPMMLACAGGFPELVEILLAAGARIDE, HKNTCLIEACDGVSGDQVSVVRMLLNRHADVNA, SGDTPMSLAARHGNIAIMKMLYEKGADLTT, KITPIVEASIETHLECVQFILAHCKTIPQ, QLSRALFAAAEGGCLKIVEELVRAGADLNF, DERTAIMKAARFNHFDIVQYLVYKGASVNF, NDATALSLACTYGNMDIAQFLIRNGADPML, and DGVNCFMEAAKHGSFDLMKLLVEFTKGNMDL. 3 disordered regions span residues 994-1030, 1172-1191, and 1230-1268; these read PIDAHQSNPPPAQQTGPKTTSLTTPQPDESNGATTIE, KSNRDKGSQQLKAAEQKKGK, and NNTQVQQQQGQQQQGQLRRTHSEGDGTERAKARSNVIDK. The span at 1006–1030 shows a compositional bias: polar residues; it reads QQTGPKTTSLTTPQPDESNGATTIE. Residues 1233 to 1245 are compositionally biased toward low complexity; the sequence is QVQQQQGQQQQGQ. The span at 1249-1260 shows a compositional bias: basic and acidic residues; it reads THSEGDGTERAK. ANK repeat units lie at residues 1273–1302, 1306–1335, 1340–1369, 1373–1402, 1408–1437, 1447–1476, 1480–1509, 1515–1546, 1548–1577, and 1581–1610; these read TLETPLSIACSNGHREVVELLLKEGANIEH, KGFTPLIIAATYGHAPIVEVLLKNHAAIEA, TKDTALSLACTAGRKDVVEMLLAHGANKEH, SDYTPLSLASSSGFLDIVNLLLTAGSEINS, LGISPLMLAAMNGHKETTKVLLEKGSDINA, YRNTALTLASFQGRFEVVKLLLCYNANVEH, TGLTPLMECASGGYVDVGNLLIENGADPNA, TKDTALTIAAEKGHEKFVQMLLDNDVIYDIRN, KGCSALWLACNGGHLGTAQALVFKGADTDM, and RKMSPMVAAFRKGHIEIIKFLVGHAKQFPN. Positions 1638 to 1696 form a coiled coil; it reads RNAKKAQAETAEETANRLLQLIDDEKERDINKKQKIKDKKKQKKEAKKKFQAEQEQLSA. The segment at 1669–1857 is disordered; that stretch reads KKQKIKDKKK…SSISERQHSW (189 aa). A compositionally biased stretch (basic residues) spans 1670 to 1686; that stretch reads KQKIKDKKKQKKEAKKK. The segment covering 1698–1708 has biased composition (pro residues); it reads PSKPEPVVAPE. Residues 1709–1722 show a composition bias toward acidic residues; sequence PEPEPETEPVEEPA. Residues 1811 to 1829 are compositionally biased toward basic and acidic residues; it reads DWQKAGKEGKKVRPKREGR. Positions 1832 to 1851 are enriched in polar residues; it reads APSSAGSSQAKHRSNTSSIS. Residues 1864 to 1929 form the KH domain; that stretch reads VKAYEFTVPG…DVVSMAVNII (66 aa). Disordered stretches follow at residues 1980–2182, 2196–2221, 2269–2292, 2301–2320, 2352–2417, 2444–2465, and 2539–2636; these read SASI…SLPS, FKPTAPAPAPVTSIAPSTSTATSTAS, NSTASSLNTATTKNDTSDWGSNDF, SNQKTSSAPQQPVSSVNSQL, SQSS…TQQQ, MHRQENSSSVPGPSQPSANPYY, and GMMQ…SSRM. Residues 1994–2008 show a composition bias toward polar residues; that stretch reads SQCNRSSKSHGNQAT. The span at 2025–2045 shows a compositional bias: low complexity; the sequence is TPPTQTQTKQQPTPSPQVQQP. Polar residues predominate over residues 2057 to 2083; the sequence is SLAQSSVPQATENVTKPTQTPPASVQQ. Composition is skewed to low complexity over residues 2099 to 2119 and 2139 to 2148; these read QVVQPVPPVHQHTPVPQQRPQ and QQHMQQIQQQ. Residues 2167-2179 are compositionally biased toward pro residues; sequence PGPPVQPQTPPQS. Residues 2269-2280 are compositionally biased toward low complexity; sequence NSTASSLNTATT. Residues 2281 to 2292 show a composition bias toward polar residues; that stretch reads KNDTSDWGSNDF. 2 stretches are compositionally biased toward low complexity: residues 2361–2373 and 2391–2417; these read QHQQQQQRIMQDP and PQQFQQPQFSSQSHPSQSSMMPSTQQQ. 3 stretches are compositionally biased toward polar residues: residues 2449-2465, 2565-2574, and 2583-2595; these read NSSSVPGPSQPSANPYY, RSASGSSQNR, and QQPQPFSQLTQAD. Residues 2599-2615 show a composition bias toward low complexity; sequence RLLLQQQQQQRSSQQQQ. Polar residues predominate over residues 2616–2636; the sequence is NPTNQGLPQKWSNTWNSSSRM.

The protein belongs to the mask family.

It localises to the cytoplasm. The sequence is that of Ankyrin repeat and KH domain-containing protein CBG24701 from Caenorhabditis briggsae.